Reading from the N-terminus, the 436-residue chain is Xylose isomerase (436 aa).

Residues H100 and D103 contribute to the active site. Mg(2+)-binding residues include E231, E267, H270, D295, D306, D308, and D338.

The protein belongs to the xylose isomerase family. In terms of assembly, homotetramer. Mg(2+) is required as a cofactor.

It is found in the cytoplasm. It carries out the reaction alpha-D-xylose = alpha-D-xylulofuranose. The sequence is that of Xylose isomerase from Rhizobium johnstonii (strain DSM 114642 / LMG 32736 / 3841) (Rhizobium leguminosarum bv. viciae).